The following is a 148-amino-acid chain: Single-stranded DNA-binding protein, mitochondrial (148 aa).

The transit peptide at 1-16 (MFRRPVLQVLRQFVRH) directs the protein to the mitochondrion. Positions 30 to 141 (LNRVHLLGRV…IIADNIIFLS (112 aa)) constitute an SSB domain. Phosphoserine is present on residues Ser-67 and Ser-79. Position 113 is an N6-acetyllysine (Lys-113). At Lys-122 the chain carries N6-succinyllysine.

In terms of assembly, homotetramer. Interacts with MPG/AAG, through inhibition of its glycosylase activity it potentially prevents formation of DNA breaks in ssDNA, ensuring that base removal primarily occurs in dsDNA. Interacts with POLDIP2. Interacts with PRIMPOL.

It localises to the mitochondrion. Its subcellular location is the mitochondrion matrix. The protein resides in the mitochondrion nucleoid. Functionally, binds preferentially and cooperatively to pyrimidine rich single-stranded DNA (ss-DNA). In vitro, required to maintain the copy number of mitochondrial DNA (mtDNA) and plays a crucial role during mtDNA replication by stimulating the activity of the replisome components POLG and TWNK at the replication fork. Promotes the activity of the gamma complex polymerase POLG, largely by organizing the template DNA and eliminating secondary structures to favor ss-DNA conformations that facilitate POLG activity. In addition it is able to promote the 5'-3' unwinding activity of the mtDNA helicase TWNK. May also function in mtDNA repair. The protein is Single-stranded DNA-binding protein, mitochondrial (SSBP1) of Pongo abelii (Sumatran orangutan).